The chain runs to 535 residues: Glutamate--cysteine ligase (535 aa).

Belongs to the glutamate--cysteine ligase type 1 family. Type 1 subfamily.

The catalysed reaction is L-cysteine + L-glutamate + ATP = gamma-L-glutamyl-L-cysteine + ADP + phosphate + H(+). The protein operates within sulfur metabolism; glutathione biosynthesis; glutathione from L-cysteine and L-glutamate: step 1/2. This chain is Glutamate--cysteine ligase, found in Pseudomonas syringae pv. syringae (strain B728a).